We begin with the raw amino-acid sequence, 61 residues long: Small ribosomal subunit protein uS14 (61 aa).

4 residues coordinate Zn(2+): cysteine 24, cysteine 27, cysteine 40, and cysteine 43.

It belongs to the universal ribosomal protein uS14 family. Zinc-binding uS14 subfamily. In terms of assembly, part of the 30S ribosomal subunit. Contacts proteins S3 and S10. It depends on Zn(2+) as a cofactor.

Binds 16S rRNA, required for the assembly of 30S particles and may also be responsible for determining the conformation of the 16S rRNA at the A site. The sequence is that of Small ribosomal subunit protein uS14 from Thermosipho africanus (strain TCF52B).